We begin with the raw amino-acid sequence, 202 residues long: Syndecan-4 (202 aa).

The N-terminal stretch at Met-1–Gly-23 is a signal peptide. The Extracellular portion of the chain corresponds to Glu-24–Glu-149. Disordered stretches follow at residues Tyr-42–Pro-76 and Leu-89–Thr-138. The O-linked (Xyl...) (glycosaminoglycan) serine glycan is linked to Ser-44. Residues Pro-48–Phe-62 show a composition bias toward acidic residues. Ser-65 and Ser-67 each carry an O-linked (Xyl...) (glycosaminoglycan) serine glycan. The span at Ser-105 to Pro-121 shows a compositional bias: basic and acidic residues. The helical transmembrane segment at Val-150–Tyr-174 threads the bilayer. Residues Arg-175–Ala-202 lie on the Cytoplasmic side of the membrane.

Belongs to the syndecan proteoglycan family. In terms of assembly, homodimer. Interacts with CDCP1 and SDCBP. Interacts (via its cytoplasmic domain) with GIPC (via its PDZ domain). Interacts (via its cytoplasmic domain) with NUDT16L1. Interacts with DNM2; this interaction is markedly enhanced at focal ahesion site upon induction of focal adhesions and stress-fiber formation. Post-translationally, shedding is enhanced by a number of factors such as heparanase, thrombin or EGF. Also by stress and wound healing. PMA-mediated shedding is inhibited by TIMP3. In terms of processing, O-glycosylated; contains both chondroitin sulfate and heparan sulfate. Ser-44, Ser-65 and Ser-67 can all be modified by either chondroitin sulfate or heparan sulfate, and the protein exists in forms that contain only chondroitin sulfate, only heparan sulfate and both chondroitin sulfate and heparan sulfate.

It localises to the membrane. It is found in the secreted. Its function is as follows. Cell surface proteoglycan which regulates exosome biogenesis in concert with SDCBP and PDCD6IP. In Rattus norvegicus (Rat), this protein is Syndecan-4.